The following is a 134-amino-acid chain: ATP synthase epsilon chain, chloroplastic (134 aa).

This sequence belongs to the ATPase epsilon chain family. In terms of assembly, F-type ATPases have 2 components, CF(1) - the catalytic core - and CF(0) - the membrane proton channel. CF(1) has five subunits: alpha(3), beta(3), gamma(1), delta(1), epsilon(1). CF(0) has three main subunits: a, b and c.

The protein localises to the plastid. Its subcellular location is the chloroplast thylakoid membrane. Its function is as follows. Produces ATP from ADP in the presence of a proton gradient across the membrane. The chain is ATP synthase epsilon chain, chloroplastic from Pelargonium hortorum (Common geranium).